The sequence spans 177 residues: Large ribosomal subunit protein uL10 (177 aa).

This sequence belongs to the universal ribosomal protein uL10 family. Part of the ribosomal stalk of the 50S ribosomal subunit. The N-terminus interacts with L11 and the large rRNA to form the base of the stalk. The C-terminus forms an elongated spine to which L12 dimers bind in a sequential fashion forming a multimeric L10(L12)X complex.

Its function is as follows. Forms part of the ribosomal stalk, playing a central role in the interaction of the ribosome with GTP-bound translation factors. The protein is Large ribosomal subunit protein uL10 of Thermoanaerobacter pseudethanolicus (strain ATCC 33223 / 39E) (Clostridium thermohydrosulfuricum).